Reading from the N-terminus, the 150-residue chain is Large ribosomal subunit protein bL9 (150 aa).

This sequence belongs to the bacterial ribosomal protein bL9 family.

Binds to the 23S rRNA. The chain is Large ribosomal subunit protein bL9 from Streptococcus pneumoniae (strain CGSP14).